A 224-amino-acid polypeptide reads, in one-letter code: Phosphoribosylformylglycinamidine synthase subunit PurQ (224 aa).

In terms of domain architecture, Glutamine amidotransferase type-1 spans 2 to 224 (KIAVIVFPGS…SLLEEGKVKG (223 aa)). Catalysis depends on Cys86, which acts as the Nucleophile. Catalysis depends on residues His195 and Glu197.

In terms of assembly, part of the FGAM synthase complex composed of 1 PurL, 1 PurQ and 2 PurS subunits.

The protein localises to the cytoplasm. It carries out the reaction N(2)-formyl-N(1)-(5-phospho-beta-D-ribosyl)glycinamide + L-glutamine + ATP + H2O = 2-formamido-N(1)-(5-O-phospho-beta-D-ribosyl)acetamidine + L-glutamate + ADP + phosphate + H(+). It catalyses the reaction L-glutamine + H2O = L-glutamate + NH4(+). The protein operates within purine metabolism; IMP biosynthesis via de novo pathway; 5-amino-1-(5-phospho-D-ribosyl)imidazole from N(2)-formyl-N(1)-(5-phospho-D-ribosyl)glycinamide: step 1/2. Part of the phosphoribosylformylglycinamidine synthase complex involved in the purines biosynthetic pathway. Catalyzes the ATP-dependent conversion of formylglycinamide ribonucleotide (FGAR) and glutamine to yield formylglycinamidine ribonucleotide (FGAM) and glutamate. The FGAM synthase complex is composed of three subunits. PurQ produces an ammonia molecule by converting glutamine to glutamate. PurL transfers the ammonia molecule to FGAR to form FGAM in an ATP-dependent manner. PurS interacts with PurQ and PurL and is thought to assist in the transfer of the ammonia molecule from PurQ to PurL. This chain is Phosphoribosylformylglycinamidine synthase subunit PurQ, found in Ligilactobacillus salivarius (strain UCC118) (Lactobacillus salivarius).